Here is a 603-residue protein sequence, read N- to C-terminus: Grainyhead-like protein 3 homolog (603 aa).

The tract at residues 30–95 is transcription activation; that stretch reads EAWKTYLENP…QGKKFYHSMD (66 aa). The 236-residue stretch at 226–461 folds into the Grh/CP2 DB domain; that stretch reads GLKSDFEYTL…DLETQPVLFI (236 aa).

This sequence belongs to the grh/CP2 family. Grainyhead subfamily. Homodimer, also forms heterodimers with GRHL1 and GRHL2. Interacts with LMO4.

The protein resides in the nucleus. Functionally, transcription factor playing important roles in primary neurulation and in the differentiation of stratified epithelia of both ectodermal and endodermal origin. Binds directly to the consensus DNA sequence 5'-AACCGGTT-3' acting as an activator and repressor on distinct target genes. Essential for epidermal differentiation and barrier formation at the end of embryogenesis with TGM3 as critical direct target. Exhibits functional redundancy with GRHL2 in epidermal morphogenetic events such as eyelid fusion and epidermal wound repair. Despite being dispensable during normal epidermal homeostasis in the adulthood, is again required for barrier repair after immune-mediated epidermal damage, regulates distinct gene batteries in embryonic epidermal differentiation and adult epidermal barrier reformation after injury. Plays unique and cooperative roles with GRHL2 in establishing distinct zones of primary neurulation. Essential for spinal closure, functions cooperatively with GRHL2 in closure 2 (forebrain/midbrain boundary) and posterior neuropore closure. Also required for proper development of the oral periderm. No genetic interaction with GRHL1, no functional cooperativity due to diverse target gene selectivity. The protein is Grainyhead-like protein 3 homolog of Mus musculus (Mouse).